Consider the following 584-residue polypeptide: MSKEECPKAADNSFSSDKHAQLILAQMNKMRSGQHFCDVQLQVGKETFQVHRLVLAASSPYFAALFTGGMKESSKDVVQILGVEAGIFQLLLDFIYTGVVNIAVTNVQELIVAADMLQLTEVVNLCCDFLKGQIDPQNCIGLFQFSEQIACHDLLEFTENYIHVHFLEVHTGEEFLGLTKDQLIKILRSEELSIEDEYQVFLAAMQWILKDLGKRRKHVVEVLDPVRFPLLPSQRLLKYIEGVSDFNLRVALQTLLKEYCEVCKSPKENKFCSFLQTSKVRPRKKARKYLYAVGGYTRLQGGRWSDSRALSCVERFDTFSQYWTTVSSLHQARCGLGVAVVGGMVYAIGGEKDSMIFDCTECYDPVTKQWTTVASMNHPRCGLGVCVCYGAIYALGGWVGAEIGNTIERFDPDENKWEVVGSMAVSRYYFGCCEMQGLIYAVGGISNEGLELRSFEVYDPLSKRWSPLPPMGTRRAYLGVAALNDCIYAIGGWNETQDALHTVEKYSFEEEKWVEVASMKVPRAGMCAVTVNGLLYVSGGRSSSHDFLAPGTLDSVEVYNPHSDTWTEIGNMITSRCEGGVAVL.

The BTB domain maps to 37–104 (CDVQLQVGKE…IYTGVVNIAV (68 aa)). 6 Kelch repeats span residues 296-343 (YTRL…VVGG), 344-390 (MVYA…VCYG), 391-437 (AIYA…EMQG), 439-485 (IYAV…ALND), 487-533 (IYAI…TVNG), and 535-583 (LYVS…GVAV).

As to expression, expression seems confined to tissues derived from trophectoderm and primitive endoderm.

It is found in the cytoplasm. It localises to the cytoskeleton. Its function is as follows. May play a role in organizing the actin cytoskeleton. This Mus musculus (Mouse) protein is Actin-binding protein IPP (Ipp).